A 471-amino-acid polypeptide reads, in one-letter code: Cytochrome b-c1 complex subunit 1, mitochondrial (471 aa).

It belongs to the peptidase M16 family.

The protein resides in the mitochondrion matrix. The protein is Cytochrome b-c1 complex subunit 1, mitochondrial (ucr-1) of Caenorhabditis elegans.